A 619-amino-acid chain; its full sequence is Translation initiation factor IF-2 (619 aa).

Composition is skewed to low complexity over residues 1–18 and 98–111; these read MTLNKKTNNENSSKTTPK and PPQLQPQTPSLTKT. 2 disordered regions span residues 1-24 and 90-113; these read MTLNKKTNNENSSKTTPKLSKETD and SEPQEKHTPPQLQPQTPSLTKTKP. A tr-type G domain is found at 121–289; sequence KKSPIVTIMG…ILLVSEIQNL (169 aa). A G1 region spans residues 130 to 137; it reads GHVDHGKT. 130-137 provides a ligand contact to GTP; that stretch reads GHVDHGKT. The G2 stretch occupies residues 155–159; sequence GITQH. Residues 176-179 form a G3 region; sequence DTPG. GTP is bound by residues 176-180 and 230-233; these read DTPGH and NKID. A G4 region spans residues 230-233; it reads NKID. The G5 stretch occupies residues 266-268; sequence SAL.

This sequence belongs to the TRAFAC class translation factor GTPase superfamily. Classic translation factor GTPase family. IF-2 subfamily.

It localises to the cytoplasm. In terms of biological role, one of the essential components for the initiation of protein synthesis. Protects formylmethionyl-tRNA from spontaneous hydrolysis and promotes its binding to the 30S ribosomal subunits. Also involved in the hydrolysis of GTP during the formation of the 70S ribosomal complex. This Onion yellows phytoplasma (strain OY-M) protein is Translation initiation factor IF-2.